The sequence spans 83 residues: Delta-conotoxin-like Ac6.2 (83 aa).

The signal sequence occupies residues 1–22; sequence MKLTCVVIVAVLFLTAWTFVTA. The propeptide occupies 23 to 51; it reads DDSRYGLKNLFPKARHEMKNPEASKLNKR. Disulfide bonds link Cys-54/Cys-69, Cys-61/Cys-73, and Cys-68/Cys-78. Residues Pro-57 and Pro-65 each carry the 4-hydroxyproline modification.

Belongs to the conotoxin O1 superfamily. In terms of tissue distribution, expressed by the venom duct.

The protein localises to the secreted. Delta-conotoxins bind to site 6 of voltage-gated sodium channels (Nav) and inhibit the inactivation process. The polypeptide is Delta-conotoxin-like Ac6.2 (Conus achatinus (Little frog cone)).